The chain runs to 353 residues: Fe(3+) ions import ATP-binding protein FbpC (353 aa).

The ABC transporter domain occupies 9 to 239 (VTFENVTKKF…PASAFIADFM (231 aa)). An ATP-binding site is contributed by 41–48 (GPSGCGKT).

It belongs to the ABC transporter superfamily. Fe(3+) ion importer (TC 3.A.1.10) family. The complex is composed of two ATP-binding proteins (FbpC), two transmembrane proteins (FbpB) and a solute-binding protein (FbpA).

The protein resides in the cell inner membrane. It catalyses the reaction Fe(3+)(out) + ATP + H2O = Fe(3+)(in) + ADP + phosphate + H(+). In terms of biological role, part of the ABC transporter complex FbpABC involved in Fe(3+) ions import. Responsible for energy coupling to the transport system. This is Fe(3+) ions import ATP-binding protein FbpC from Brucella abortus (strain 2308).